Here is a 461-residue protein sequence, read N- to C-terminus: RCC1-like G exchanging factor-like protein (461 aa).

Residues 1–10 (MLAAARALRG) show a composition bias toward low complexity. A mitochondrion-targeting transit peptide spans 1-34 (MLAAARALRGPRPRWPTPAREHWTPAGRSRSRRE). The interval 1-35 (MLAAARALRGPRPRWPTPAREHWTPAGRSRSRREA) is disordered. RCC1 repeat units lie at residues 55–121 (ADRV…LSSK), 125–188 (VTKV…VLTD), 190–244 (EGVF…FLTD), 245–297 (KGEV…ALSA), 298–350 (DGGV…VLNA), 352–408 (GHVF…ALTN), and 409–458 (KGEL…TLAK).

Forms a regulatory protein-RNA complex, consisting of RCC1L, NGRN, RPUSD3, RPUSD4, TRUB2, FASTKD2 and 16S mt-rRNA. Interacts with 16S mt-rRNA; this interaction is direct. Interacts with OPA1; this interaction is direct. As to expression, at E8.5, broadly expressed in yolk sac placenta, decidua, and embryo, with highest levels found in the trophoblast giant cells (TGCs) and ectoplacental cone (at protein level).

It is found in the mitochondrion inner membrane. In terms of biological role, guanine nucleotide exchange factor (GEF) for mitochondrial dynamin-related GTPase OPA1. Activates OPA1, by exchanging bound GDP for free GTP, and drives OPA1 and MFN1-dependent mitochondrial fusion. Plays an essential role in mitochondrial ribosome biogenesis. As a component of a functional protein-RNA module, consisting of RCC1L, NGRN, RPUSD3, RPUSD4, TRUB2, FASTKD2 and 16S mitochondrial ribosomal RNA (16S mt-rRNA), controls 16S mt-rRNA abundance and is required for intra-mitochondrial translation of core subunits of the oxidative phosphorylation system. The chain is RCC1-like G exchanging factor-like protein from Mus musculus (Mouse).